The chain runs to 219 residues: Ribose-5-phosphate isomerase A (219 aa).

Residues 28-31, 81-84, and 94-97 contribute to the substrate site; these read SGST, DGAD, and KGGG. The active-site Proton acceptor is the Glu103. Residue Lys121 participates in substrate binding.

Belongs to the ribose 5-phosphate isomerase family. Homodimer.

It catalyses the reaction aldehydo-D-ribose 5-phosphate = D-ribulose 5-phosphate. The protein operates within carbohydrate degradation; pentose phosphate pathway; D-ribose 5-phosphate from D-ribulose 5-phosphate (non-oxidative stage): step 1/1. Catalyzes the reversible conversion of ribose-5-phosphate to ribulose 5-phosphate. The chain is Ribose-5-phosphate isomerase A from Actinobacillus pleuropneumoniae serotype 3 (strain JL03).